The chain runs to 1045 residues: B3 domain-containing protein REM13 (1045 aa).

A DNA-binding region (TF-B3 1) is located at residues 7 to 96 (YPQFFHTLVP…VFHVSNLGPN (90 aa)). The interval 121 to 147 (NNGDVCDSEELPKEKKAKTNSEEADAV) is disordered. Residues 130-141 (ELPKEKKAKTNS) are compositionally biased toward basic and acidic residues. DNA-binding regions (TF-B3) lie at residues 157–253 (CFMA…FCPT) and 305–398 (FVTF…CSPE). The interval 423-449 (NRDKISNNDKEENMSWERKKDHLKSRD) is disordered. Residues 474–570 (SNDSCLVVVS…TPVLSLCPAD (97 aa)) constitute a DNA-binding region (TF-B3 4). A disordered region spans residues 606-625 (IKDDNSKEKNDKEESKSVDG). 3 consecutive DNA-binding regions (TF-B3) follow at residues 643–738 (FVTL…LRTE), 815–910 (FVTF…LRTK), and 940–1035 (FVTL…LKFS).

It localises to the nucleus. The sequence is that of B3 domain-containing protein REM13 (REM13) from Arabidopsis thaliana (Mouse-ear cress).